The following is a 611-amino-acid chain: Probable methyltransferase PMT19 (611 aa).

Residues 1–15 (MNPSQQHLPKLCPKR) lie on the Cytoplasmic side of the membrane. The chain crosses the membrane as a helical; Signal-anchor for type II membrane protein span at residues 16-36 (LFLFFTPFLLFSLYYILTTIK). The Lumenal segment spans residues 37–611 (TITISSQDRH…TILIVDNSIK (575 aa)). Asparagine 68, asparagine 97, asparagine 289, asparagine 408, asparagine 411, and asparagine 587 each carry an N-linked (GlcNAc...) asparagine glycan.

Belongs to the methyltransferase superfamily.

It localises to the endoplasmic reticulum membrane. This Arabidopsis thaliana (Mouse-ear cress) protein is Probable methyltransferase PMT19.